Consider the following 117-residue polypeptide: uncharacterized protein (117 aa).

A helical transmembrane segment spans residues 10 to 32; it reads VCYLGDIAASGFLNSIATALIAV.

The protein resides in the membrane. This is an uncharacterized protein from Rickettsia conorii (strain ATCC VR-613 / Malish 7).